The following is a 134-amino-acid chain: Phosphoribosyl-AMP cyclohydrolase (134 aa).

A Mg(2+)-binding site is contributed by aspartate 90. Position 91 (cysteine 91) interacts with Zn(2+). 2 residues coordinate Mg(2+): aspartate 92 and aspartate 94. Residues cysteine 107 and cysteine 114 each contribute to the Zn(2+) site.

This sequence belongs to the PRA-CH family. As to quaternary structure, homodimer. Mg(2+) is required as a cofactor. Requires Zn(2+) as cofactor.

Its subcellular location is the cytoplasm. The enzyme catalyses 1-(5-phospho-beta-D-ribosyl)-5'-AMP + H2O = 1-(5-phospho-beta-D-ribosyl)-5-[(5-phospho-beta-D-ribosylamino)methylideneamino]imidazole-4-carboxamide. The protein operates within amino-acid biosynthesis; L-histidine biosynthesis; L-histidine from 5-phospho-alpha-D-ribose 1-diphosphate: step 3/9. Its function is as follows. Catalyzes the hydrolysis of the adenine ring of phosphoribosyl-AMP. This chain is Phosphoribosyl-AMP cyclohydrolase, found in Arthrobacter sp. (strain FB24).